The following is a 712-amino-acid chain: Elongation factor G (712 aa).

Residues 8–290 (TRYRNIGISA…AVIEFLPSPT (283 aa)) form the tr-type G domain. GTP contacts are provided by residues 17 to 24 (AHIDAGKT), 88 to 92 (DTPGH), and 142 to 145 (NKMD).

It belongs to the TRAFAC class translation factor GTPase superfamily. Classic translation factor GTPase family. EF-G/EF-2 subfamily.

Its subcellular location is the cytoplasm. In terms of biological role, catalyzes the GTP-dependent ribosomal translocation step during translation elongation. During this step, the ribosome changes from the pre-translocational (PRE) to the post-translocational (POST) state as the newly formed A-site-bound peptidyl-tRNA and P-site-bound deacylated tRNA move to the P and E sites, respectively. Catalyzes the coordinated movement of the two tRNA molecules, the mRNA and conformational changes in the ribosome. This is Elongation factor G from Acinetobacter baumannii (strain AB0057).